A 119-amino-acid chain; its full sequence is Large ribosomal subunit protein bL19 (119 aa).

This sequence belongs to the bacterial ribosomal protein bL19 family.

In terms of biological role, this protein is located at the 30S-50S ribosomal subunit interface and may play a role in the structure and function of the aminoacyl-tRNA binding site. The protein is Large ribosomal subunit protein bL19 of Leuconostoc citreum (strain KM20).